The primary structure comprises 356 residues: 4-hydroxy-3-methylbut-2-en-1-yl diphosphate synthase (flavodoxin) (356 aa).

Residues C262, C265, C297, and E304 each contribute to the [4Fe-4S] cluster site.

This sequence belongs to the IspG family. Requires [4Fe-4S] cluster as cofactor.

It catalyses the reaction (2E)-4-hydroxy-3-methylbut-2-enyl diphosphate + oxidized [flavodoxin] + H2O + 2 H(+) = 2-C-methyl-D-erythritol 2,4-cyclic diphosphate + reduced [flavodoxin]. It functions in the pathway isoprenoid biosynthesis; isopentenyl diphosphate biosynthesis via DXP pathway; isopentenyl diphosphate from 1-deoxy-D-xylulose 5-phosphate: step 5/6. Converts 2C-methyl-D-erythritol 2,4-cyclodiphosphate (ME-2,4cPP) into 1-hydroxy-2-methyl-2-(E)-butenyl 4-diphosphate. The protein is 4-hydroxy-3-methylbut-2-en-1-yl diphosphate synthase (flavodoxin) of Campylobacter fetus subsp. fetus (strain 82-40).